A 1488-amino-acid polypeptide reads, in one-letter code: Chromosome partition protein MukB (1488 aa).

An ATP-binding site is contributed by 34–41; that stretch reads GGNGAGKS. Coiled-coil stretches lie at residues 326–418, 444–472, and 509–602; these read LEAD…QYNQ, LDTF…QTAH, and RHLA…RRAP. Residues 666-783 are flexible hinge; sequence PGGAEDQRLN…SLPIFGRAAR (118 aa). Coiled-coil stretches lie at residues 835 to 923, 977 to 1116, and 1209 to 1265; these read EAEI…AKLE, EMLS…AKAG, and VEAI…LQSV. Residues 1049 to 1074 form a disordered region; the sequence is ADSGAEERARQRRDELHAQLSNNRSR. The span at 1051–1065 shows a compositional bias: basic and acidic residues; sequence SGAEERARQRRDELH.

Belongs to the SMC family. MukB subfamily. Homodimerization via its hinge domain. Binds to DNA via its C-terminal region. Interacts, and probably forms a ternary complex, with MukE and MukF via its C-terminal region. The complex formation is stimulated by calcium or magnesium. Interacts with tubulin-related protein FtsZ.

Its subcellular location is the cytoplasm. It is found in the nucleoid. Functionally, plays a central role in chromosome condensation, segregation and cell cycle progression. Functions as a homodimer, which is essential for chromosome partition. Involved in negative DNA supercoiling in vivo, and by this means organize and compact chromosomes. May achieve or facilitate chromosome segregation by condensation DNA from both sides of a centrally located replisome during cell division. This is Chromosome partition protein MukB from Salmonella agona (strain SL483).